We begin with the raw amino-acid sequence, 164 residues long: uncharacterized protein (164 aa).

The signal sequence occupies residues 1–22; the sequence is MKTNRSLVVIVSLITATLLLTA. The N-palmitoyl cysteine moiety is linked to residue C23. The S-diacylglycerol cysteine moiety is linked to residue C23.

It is found in the cell membrane. This is an uncharacterized protein from Escherichia coli (strain K12).